The following is a 761-amino-acid chain: Phosphoribosylformylglycinamidine synthase subunit PurL (761 aa).

The active site involves histidine 58. ATP contacts are provided by tyrosine 61 and lysine 105. Mg(2+) is bound at residue glutamate 107. Substrate-binding positions include 108 to 111 (SHNH) and arginine 130. The active-site Proton acceptor is histidine 109. Aspartate 131 serves as a coordination point for Mg(2+). Substrate is bound at residue glutamine 259. Position 287 (aspartate 287) interacts with Mg(2+). Position 331 to 333 (331 to 333 (ESQ)) interacts with substrate. ATP contacts are provided by asparagine 519 and glycine 556. Asparagine 557 lines the Mg(2+) pocket. Serine 559 contributes to the substrate binding site.

This sequence belongs to the FGAMS family. In terms of assembly, monomer. Part of the FGAM synthase complex composed of 1 PurL, 1 PurQ and 2 PurS subunits.

The protein resides in the cytoplasm. It carries out the reaction N(2)-formyl-N(1)-(5-phospho-beta-D-ribosyl)glycinamide + L-glutamine + ATP + H2O = 2-formamido-N(1)-(5-O-phospho-beta-D-ribosyl)acetamidine + L-glutamate + ADP + phosphate + H(+). The protein operates within purine metabolism; IMP biosynthesis via de novo pathway; 5-amino-1-(5-phospho-D-ribosyl)imidazole from N(2)-formyl-N(1)-(5-phospho-D-ribosyl)glycinamide: step 1/2. Its function is as follows. Part of the phosphoribosylformylglycinamidine synthase complex involved in the purines biosynthetic pathway. Catalyzes the ATP-dependent conversion of formylglycinamide ribonucleotide (FGAR) and glutamine to yield formylglycinamidine ribonucleotide (FGAM) and glutamate. The FGAM synthase complex is composed of three subunits. PurQ produces an ammonia molecule by converting glutamine to glutamate. PurL transfers the ammonia molecule to FGAR to form FGAM in an ATP-dependent manner. PurS interacts with PurQ and PurL and is thought to assist in the transfer of the ammonia molecule from PurQ to PurL. This is Phosphoribosylformylglycinamidine synthase subunit PurL from Rhodococcus jostii (strain RHA1).